Here is a 122-residue protein sequence, read N- to C-terminus: Fluoride-specific ion channel FluC (122 aa).

The next 4 membrane-spanning stretches (helical) occupy residues 4 to 24, 36 to 56, 65 to 85, and 100 to 120; these read ILLIGLGGFFGAILRYLVSGI, LIVNLLGSFIIGFLIYSSLFG, FIITGFCGALTTFSTFSYESF, and ILLNVFGCLGMVYLGRLASMF. Na(+)-binding residues include Gly-72 and Thr-75.

Belongs to the fluoride channel Fluc/FEX (TC 1.A.43) family.

It is found in the cell membrane. It catalyses the reaction fluoride(in) = fluoride(out). Its activity is regulated as follows. Na(+) is not transported, but it plays an essential structural role and its presence is essential for fluoride channel function. In terms of biological role, fluoride-specific ion channel. Important for reducing fluoride concentration in the cell, thus reducing its toxicity. In Methanococcus maripaludis (strain DSM 14266 / JCM 13030 / NBRC 101832 / S2 / LL), this protein is Fluoride-specific ion channel FluC.